Reading from the N-terminus, the 419-residue chain is Protein FAM217A (419 aa).

Disordered stretches follow at residues 1-60, 96-119, 236-299, and 317-382; these read MGRK…LENP, KGST…DLSE, SSSK…SRAL, and KNSK…RTKK. Residues 7–19 are compositionally biased toward low complexity; the sequence is ESCSSSLHVSSIS. The segment covering 236–251 has biased composition (low complexity); that stretch reads SSSKAIATKAKAPKIP. 2 stretches are compositionally biased toward polar residues: residues 252 to 261 and 271 to 281; these read ETSTLQTSGV and NSGSGKPEQNV. Low complexity-rich tracts occupy residues 282–296 and 334–345; these read SKWS…KSNS and PTTTTQATQPMA.

This sequence belongs to the FAM217 family.

The sequence is that of Protein FAM217A (Fam217a) from Mus musculus (Mouse).